A 388-amino-acid polypeptide reads, in one-letter code: Succinate--CoA ligase [ADP-forming] subunit beta (388 aa).

Residues 9-244 (KEILRKYNVP…LDEEDANEIE (236 aa)) form the ATP-grasp domain. ATP-binding positions include Lys46, 53-55 (GRG), Glu99, Ala102, and Glu107. Asn199 and Asp213 together coordinate Mg(2+). Residues Asn264 and 321 to 323 (GIM) contribute to the substrate site.

The protein belongs to the succinate/malate CoA ligase beta subunit family. Heterotetramer of two alpha and two beta subunits. It depends on Mg(2+) as a cofactor.

It catalyses the reaction succinate + ATP + CoA = succinyl-CoA + ADP + phosphate. It carries out the reaction GTP + succinate + CoA = succinyl-CoA + GDP + phosphate. It participates in carbohydrate metabolism; tricarboxylic acid cycle; succinate from succinyl-CoA (ligase route): step 1/1. In terms of biological role, succinyl-CoA synthetase functions in the citric acid cycle (TCA), coupling the hydrolysis of succinyl-CoA to the synthesis of either ATP or GTP and thus represents the only step of substrate-level phosphorylation in the TCA. The beta subunit provides nucleotide specificity of the enzyme and binds the substrate succinate, while the binding sites for coenzyme A and phosphate are found in the alpha subunit. This chain is Succinate--CoA ligase [ADP-forming] subunit beta, found in Cupriavidus necator (strain ATCC 17699 / DSM 428 / KCTC 22496 / NCIMB 10442 / H16 / Stanier 337) (Ralstonia eutropha).